The sequence spans 123 residues: Protein Wnt-3a (123 aa).

A lipid anchor (O-palmitoleoyl serine) is attached at Ser1. Cys89 and Cys104 are oxidised to a cystine. The N-linked (GlcNAc...) asparagine glycan is linked to Asn90.

Belongs to the Wnt family. Disulfide bonds have critical and distinct roles in secretion and activity. Loss of each conserved cysteine results in high molecular weight oxidized Wnt oligomers, which are formed through inter-Wnt disulfide bonding. In terms of processing, palmitoleoylation is required for efficient binding to frizzled receptors. Depalmitoleoylation leads to Wnt signaling pathway inhibition.

Its subcellular location is the secreted. It localises to the extracellular space. The protein localises to the extracellular matrix. Functionally, ligand for members of the frizzled family of seven transmembrane receptors. Functions in the canonical Wnt signaling pathway that results in activation of transcription factors of the TCF/LEF family. Required for normal embryonic mesoderm development and formation of caudal somites. Required for normal morphogenesis of the developing neural tube. The polypeptide is Protein Wnt-3a (WNT-3A) (Alopias vulpinus (Common thresher shark)).